A 478-amino-acid chain; its full sequence is Transposase for insertion sequence element IS231D (478 aa).

This sequence belongs to the transposase 11 family.

Functionally, involved in the transposition of the insertion sequence. In Bacillus thuringiensis subsp. finitimus, this protein is Transposase for insertion sequence element IS231D.